Reading from the N-terminus, the 165-residue chain is Crossover junction endodeoxyribonuclease RuvC (165 aa).

Catalysis depends on residues D7, E67, and D140. 3 residues coordinate Mg(2+): D7, E67, and D140.

This sequence belongs to the RuvC family. As to quaternary structure, homodimer which binds Holliday junction (HJ) DNA. The HJ becomes 2-fold symmetrical on binding to RuvC with unstacked arms; it has a different conformation from HJ DNA in complex with RuvA. In the full resolvosome a probable DNA-RuvA(4)-RuvB(12)-RuvC(2) complex forms which resolves the HJ. The cofactor is Mg(2+).

The protein resides in the cytoplasm. The catalysed reaction is Endonucleolytic cleavage at a junction such as a reciprocal single-stranded crossover between two homologous DNA duplexes (Holliday junction).. The RuvA-RuvB-RuvC complex processes Holliday junction (HJ) DNA during genetic recombination and DNA repair. Endonuclease that resolves HJ intermediates. Cleaves cruciform DNA by making single-stranded nicks across the HJ at symmetrical positions within the homologous arms, yielding a 5'-phosphate and a 3'-hydroxyl group; requires a central core of homology in the junction. The consensus cleavage sequence is 5'-(A/T)TT(C/G)-3'. Cleavage occurs on the 3'-side of the TT dinucleotide at the point of strand exchange. HJ branch migration catalyzed by RuvA-RuvB allows RuvC to scan DNA until it finds its consensus sequence, where it cleaves and resolves the cruciform DNA. The polypeptide is Crossover junction endodeoxyribonuclease RuvC (Caldanaerobacter subterraneus subsp. tengcongensis (strain DSM 15242 / JCM 11007 / NBRC 100824 / MB4) (Thermoanaerobacter tengcongensis)).